The primary structure comprises 96 residues: Molybdopterin synthase sulfur carrier subunit (96 aa).

Glycine 96 is modified (1-thioglycine; alternate). Position 96 is a glycyl adenylate; alternate (glycine 96).

It belongs to the MoaD family. MOCS2A subfamily. In terms of assembly, heterotetramer; composed of 2 small (MOCS2A) and 2 large (MOCS2B) subunits. In terms of processing, C-terminal thiocarboxylation occurs in 2 steps, it is first acyl-adenylated (-COAMP) via the hesA/moeB/thiF part of UBA4, then thiocarboxylated (-COSH) via the rhodanese domain of UBA4.

The protein resides in the cytoplasm. The protein operates within cofactor biosynthesis; molybdopterin biosynthesis. Acts as a sulfur carrier required for molybdopterin biosynthesis. Component of the molybdopterin synthase complex that catalyzes the conversion of precursor Z into molybdopterin by mediating the incorporation of 2 sulfur atoms into precursor Z to generate a dithiolene group. In the complex, serves as sulfur donor by being thiocarboxylated (-COSH) at its C-terminus by UBA4. After interaction with MOCS2B, the sulfur is then transferred to precursor Z to form molybdopterin. This Phaeosphaeria nodorum (strain SN15 / ATCC MYA-4574 / FGSC 10173) (Glume blotch fungus) protein is Molybdopterin synthase sulfur carrier subunit.